Consider the following 326-residue polypeptide: Peroxidase 6 (326 aa).

The signal sequence occupies residues 1–20; the sequence is MKSFGLCLFILVSSPCLLQA. Residue asparagine 21 is glycosylated (N-linked (GlcNAc...) asparagine). 4 disulfide bridges follow: cysteine 31-cysteine 112, cysteine 64-cysteine 69, cysteine 118-cysteine 318, and cysteine 197-cysteine 228. Residue histidine 62 is the Proton acceptor of the active site. Ca(2+)-binding residues include aspartate 63, valine 66, glycine 68, aspartate 70, and serine 72. An N-linked (GlcNAc...) asparagine glycan is attached at asparagine 163. Histidine 190 contributes to the heme b binding site. Residue threonine 191 participates in Ca(2+) binding. Residues asparagine 206 and asparagine 230 are each glycosylated (N-linked (GlcNAc...) asparagine). Positions 242, 245, and 250 each coordinate Ca(2+). Residue asparagine 274 is glycosylated (N-linked (GlcNAc...) asparagine).

This sequence belongs to the peroxidase family. Classical plant (class III) peroxidase subfamily. It depends on heme b as a cofactor. The cofactor is Ca(2+).

Its subcellular location is the secreted. It catalyses the reaction 2 a phenolic donor + H2O2 = 2 a phenolic radical donor + 2 H2O. Its function is as follows. Removal of H(2)O(2), oxidation of toxic reductants, biosynthesis and degradation of lignin, suberization, auxin catabolism, response to environmental stresses such as wounding, pathogen attack and oxidative stress. These functions might be dependent on each isozyme/isoform in each plant tissue. This chain is Peroxidase 6 (PER6), found in Arabidopsis thaliana (Mouse-ear cress).